The primary structure comprises 278 residues: NAD-dependent protein deacylase (278 aa).

Residues 22 to 270 form the Deacetylase sirtuin-type domain; sequence RSRIFHRDSA…PEYIREFLTT (249 aa). NAD(+) is bound at residue 46–65; it reads GAGISAESGIRTFRADDGLW. Residues tyrosine 90 and arginine 93 each contribute to the substrate site. 127 to 130 contributes to the NAD(+) binding site; the sequence is QNID. The active-site Proton acceptor is the histidine 145. Positions 153 and 172 each coordinate Zn(2+). Residues 212-214, 238-240, and alanine 256 each bind NAD(+); these read GTS and NLE.

This sequence belongs to the sirtuin family. Class III subfamily. The cofactor is Zn(2+).

The protein resides in the cytoplasm. It catalyses the reaction N(6)-acetyl-L-lysyl-[protein] + NAD(+) + H2O = 2''-O-acetyl-ADP-D-ribose + nicotinamide + L-lysyl-[protein]. The catalysed reaction is N(6)-succinyl-L-lysyl-[protein] + NAD(+) + H2O = 2''-O-succinyl-ADP-D-ribose + nicotinamide + L-lysyl-[protein]. The enzyme catalyses N(6)-(2-hydroxyisobutanoyl)-L-lysyl-[protein] + NAD(+) + H2O = 2''-O-(2-hydroxyisobutanoyl)-ADP-D-ribose + nicotinamide + L-lysyl-[protein]. Its function is as follows. NAD-dependent lysine deacetylase that specifically removes acetyl groups on target proteins. Also acts as a protein-lysine deacylase by mediating protein desuccinylation and de-2-hydroxyisobutyrylation. Modulates the activities of several proteins which are inactive in their acylated form. The chain is NAD-dependent protein deacylase from Yersinia pestis.